The sequence spans 867 residues: Bifunctional cis-abienol synthase, chloroplastic (867 aa).

A chloroplast-targeting transit peptide spans 1–49 (MALPVYSLKSHIPITTIASAKMNYTPNKGMITANGRSRRIRLSPNKIVA). Lysine 270 is a binding site for substrate. The short motif at 403–406 (DIDD) is the DXDD motif element. Lysine 490 contacts substrate. Residues aspartate 622, aspartate 626, asparagine 763, aspartate 764, threonine 767, and glutamate 771 each coordinate Mg(2+). The short motif at 622–626 (DDLYD) is the DDXXD motif element.

It belongs to the terpene synthase family. Tpsd subfamily. Requires Mg(2+) as cofactor.

The protein resides in the plastid. The protein localises to the chloroplast. The catalysed reaction is 8-hydroxycopalyl diphosphate = cis-abienol + diphosphate. The enzyme catalyses (2E,6E,10E)-geranylgeranyl diphosphate + H2O = 8-hydroxycopalyl diphosphate. The protein operates within terpene metabolism; oleoresin biosynthesis. Its function is as follows. Involved in the biosynthesis of cis-abienol, a labdane diterpene that can be used as synthesis precursor of ambergris substitution fragance products. Bifunctional class I/II enzyme in which both the bicyclization and water capture occur in the class II active site, resulting in an intermediary labda-13-en-8-ol diphosphate, which undergoes cleavage of the diphosphate group and final deprotonation at the class I active site. No activity with copalyl diphosphate as substrate. This chain is Bifunctional cis-abienol synthase, chloroplastic (CAS), found in Abies balsamea (Balsam fir).